The following is a 396-amino-acid chain: MAMAMDRIVFSPSSYVYRPCQARGSRSSRVSMASTIRSATTEVTNGRKLYIPPREVHVQVKHSMPPQKLEIFKSLEGWADETLLTYLKPVEKSWQPTDFLPEPESEGFYDQVKELRERCKELPDDYFVVLVGDMITEEALPTYQTMLNTLDGVRDETGASPTPWAIWTRAWTAEENRHGDLLNKYLYLSGRVDMRQIEKTIQYLIGSGMDPKTENNPYLGFIYTSFQERATFISHGNTARLAKDRGDLKLAQICGTIAADERRHETAYTKIVEKLFEIDPDGTILGLADMMKKKISMPAHLMYDGQDDNLFEHFSTVAQRLGVYTAKDYADILEFLVERWNVETLTDLSSEGHRAQDFVCGLPARIRKIEERAQGRAKEAAKNIPFSWIFGRNIRA.

A chloroplast-targeting transit peptide spans Met-1–Arg-29. Glu-137, Glu-175, His-178, Glu-228, Glu-261, and His-264 together coordinate Fe cation.

It belongs to the fatty acid desaturase type 2 family. Homodimer. Requires Fe(2+) as cofactor. In terms of tissue distribution, ubiquitously expressed with a preference in leaves, flowers and stems.

It is found in the plastid. The protein localises to the chloroplast stroma. The catalysed reaction is octadecanoyl-[ACP] + 2 reduced [2Fe-2S]-[ferredoxin] + O2 + 2 H(+) = (9Z)-octadecenoyl-[ACP] + 2 oxidized [2Fe-2S]-[ferredoxin] + 2 H2O. It participates in lipid metabolism; fatty acid metabolism. In terms of biological role, converts stearoyl-ACP to oleoyl-ACP by introduction of a cis double bond between carbons 9 and 10 of the acyl chain. This chain is Stearoyl-[acyl-carrier-protein] 9-desaturase 5, chloroplastic (S-ACP-DES5), found in Arabidopsis thaliana (Mouse-ear cress).